A 763-amino-acid polypeptide reads, in one-letter code: ATP-dependent RNA helicase SUV3 homolog, mitochondrial (763 aa).

A mitochondrion-targeting transit peptide spans 1-43 (MQNCRRCISLTGLLRMTLYLRPSFSIDLSLRRLHRAAFLFSRK). A Helicase ATP-binding domain is found at 181 to 321 (NARAITRKIV…ALDLLQKICE (141 aa)). 194–201 (GPTNSGKT) lines the ATP pocket. Residues 330–508 (RLYDRLTELT…PTADQIELYA (179 aa)) form the Helicase C-terminal domain. The interval 724–763 (AQQLGKSNSQSNENSEPVVNSDDEDNYSGIGRKTRKKRRK) is disordered. The segment covering 727–741 (LGKSNSQSNENSEPV) has biased composition (polar residues).

It belongs to the helicase family. The cofactor is Mg(2+). Mn(2+) is required as a cofactor.

It localises to the mitochondrion. The catalysed reaction is ATP + H2O = ADP + phosphate + H(+). Its function is as follows. Major helicase player in mitochondrial RNA metabolism and maintenance. Likely component of the mitochondrial degradosome (mtEXO) complex, that degrades 3' overhang double-stranded RNA with a 3'-to-5' directionality in an ATP-dependent manner. ATPase and ATP-dependent multisubstrate helicase, able to unwind double-stranded (ds) DNA and RNA, and RNA/DNA heteroduplexes in the 5'-to-3' direction. Regulates mRNA stability and is required for the correct processing and maturation of mitochondrial transcripts. This is ATP-dependent RNA helicase SUV3 homolog, mitochondrial from Drosophila melanogaster (Fruit fly).